A 96-amino-acid polypeptide reads, in one-letter code: (4S)-4-hydroxy-5-phosphonooxypentane-2,3-dione isomerase (96 aa).

In terms of domain architecture, ABM spans 2–91; that stretch reads HVTLVEINVH…MTGPRTKKVF (90 aa).

Belongs to the LsrG family. As to quaternary structure, homodimer.

The protein resides in the cytoplasm. The enzyme catalyses (2S)-2-hydroxy-3,4-dioxopentyl phosphate = 3-hydroxy-2,4-dioxopentyl phosphate. In terms of biological role, involved in the degradation of phospho-AI-2, thereby terminating induction of the lsr operon and closing the AI-2 signaling cycle. Catalyzes the conversion of (4S)-4-hydroxy-5-phosphonooxypentane-2,3-dione (P-DPD) to 3-hydroxy-5-phosphonooxypentane-2,4-dione (P-HPD). The polypeptide is (4S)-4-hydroxy-5-phosphonooxypentane-2,3-dione isomerase (Salmonella choleraesuis (strain SC-B67)).